We begin with the raw amino-acid sequence, 844 residues long: Putative ubiquitin thioesterase 232R (844 aa).

Disordered regions lie at residues 136–223 (NSST…DEAE), 261–287 (SRRK…PPME), 326–377 (LLNG…PELT), and 422–541 (QKKQ…KLSV). Positions 137 to 216 (SSTRSRSPSV…PSRQSVRQSS (80 aa)) are enriched in low complexity. 2 stretches are compositionally biased toward low complexity: residues 332-341 (RPSPSLPQSR) and 354-364 (RSPSVGSPSVR). Positions 429–438 (SPSPTPPSPV) are enriched in pro residues. Residues 472–485 (VQKKMGKSGEREPK) are compositionally biased toward basic and acidic residues. A compositionally biased stretch (low complexity) spans 504–518 (SLRSRLSTQQQTQQS). The span at 526 to 535 (ESIKPEESVR) shows a compositional bias: basic and acidic residues. Positions 590 to 725 (YTVKQVSGDG…NYHYTSLVPI (136 aa)) constitute an OTU domain. Aspartate 598 is an active-site residue. Cysteine 601 serves as the catalytic Nucleophile. Histidine 718 is a catalytic residue.

The catalysed reaction is Thiol-dependent hydrolysis of ester, thioester, amide, peptide and isopeptide bonds formed by the C-terminal Gly of ubiquitin (a 76-residue protein attached to proteins as an intracellular targeting signal).. Hydrolase that can remove conjugated ubiquitin from proteins and may therefore play an important regulatory role at the level of protein turnover by preventing degradation. The chain is Putative ubiquitin thioesterase 232R from Aedes vexans (Inland floodwater mosquito).